Here is a 195-residue protein sequence, read N- to C-terminus: Oocyte-secreted protein 3 (195 aa).

A signal peptide spans 1-21 (MKAFVASGLLLLIFGMWRCSG). N-linked (GlcNAc...) asparagine glycosylation occurs at asparagine 102.

The protein belongs to the PLAC1 family. Oocyte-specific.

The protein resides in the secreted. This is Oocyte-secreted protein 3 from Mus musculus (Mouse).